The primary structure comprises 464 residues: tRNA(Ile2) 2-agmatinylcytidine synthetase TiaS (464 aa).

Belongs to the TiaS family.

It is found in the cytoplasm. It carries out the reaction cytidine(34) in tRNA(Ile2) + agmatine + ATP + H2O = 2-agmatinylcytidine(34) in tRNA(Ile2) + AMP + 2 phosphate + 2 H(+). Functionally, ATP-dependent agmatine transferase that catalyzes the formation of 2-agmatinylcytidine (agm2C) at the wobble position (C34) of tRNA(Ile2), converting the codon specificity from AUG to AUA. The chain is tRNA(Ile2) 2-agmatinylcytidine synthetase TiaS from Ignisphaera aggregans (strain DSM 17230 / JCM 13409 / AQ1.S1).